A 1392-amino-acid polypeptide reads, in one-letter code: ABC transporter G family member 42 (1392 aa).

Over residues 1 to 18 (MTMSQTDGVEFASRNTNE) the composition is skewed to polar residues. The segment at 1–26 (MTMSQTDGVEFASRNTNENGHDDDDQ) is disordered. Residues 139–413 (SKLSRFMCSN…FEDCGFKCPN (275 aa)) form the ABC transporter 1 domain. 173-180 (GPPSCGKT) serves as a coordination point for ATP. The ABC transmembrane type-2 1 domain maps to 491-703 (DMLKACSRRE…AEIGLTANEF (213 aa)). A run of 6 helical transmembrane segments spans residues 509–529 (FVYVFKSGLLIFIGFIAMTVY), 543–563 (YLMGSLFFSLFKLLADGLPEL), 596–616 (IPISFLESFLWTMLTYYVIGY), 627–647 (FLILFALHLSCISMFRAIAAV), 652–672 (VVATTVGSISIVLLSVFGGFI), and 739–759 (FGALIGFTLFFNTVFALALTF). An ABC transporter 2 domain is found at 800 to 1045 (FTFQDVQYII…VIEYFMRIHG (246 aa)). ATP is bound at residue 837 to 844 (GVSGAGKT). Positions 1117-1331 (EQFKACLWKQ…VLNGLLTSQY (215 aa)) constitute an ABC transmembrane type-2 2 domain. The next 7 membrane-spanning stretches (helical) occupy residues 1136–1156 (YNLTRIIFMSFTCMLCGILFW), 1175–1195 (MFTVVLFSGINNCSTVLFSVA), 1215–1237 (YSLAQVLVEIPYSLFQSIVYVII), 1255–1275 (FYSIFCTLLIFNYFGMLLVVV), 1281–1301 (IAFTLRSSFYAIVNLFAGYVM), 1309–1329 (WWIWMYYLSPTSWVLNGLLTS), and 1364–1384 (LVAVVLIAFPILLASLFAFFI).

This sequence belongs to the ABC transporter superfamily. ABCG family. PDR (TC 3.A.1.205) subfamily. As to expression, confined to shoots.

The protein localises to the membrane. Its function is as follows. May be a general defense protein. The polypeptide is ABC transporter G family member 42 (ABCG42) (Arabidopsis thaliana (Mouse-ear cress)).